We begin with the raw amino-acid sequence, 226 residues long: 7-cyano-7-deazaguanine synthase (226 aa).

8–18 (LSGGLDSTTTL) lines the ATP pocket. Zn(2+)-binding residues include Cys-188, Cys-198, Cys-201, and Cys-204.

It belongs to the QueC family. It depends on Zn(2+) as a cofactor.

It carries out the reaction 7-carboxy-7-deazaguanine + NH4(+) + ATP = 7-cyano-7-deazaguanine + ADP + phosphate + H2O + H(+). It functions in the pathway purine metabolism; 7-cyano-7-deazaguanine biosynthesis. Catalyzes the ATP-dependent conversion of 7-carboxy-7-deazaguanine (CDG) to 7-cyano-7-deazaguanine (preQ(0)). This is 7-cyano-7-deazaguanine synthase from Nitrosomonas eutropha (strain DSM 101675 / C91 / Nm57).